The chain runs to 319 residues: ATP-dependent 6-phosphofructokinase (319 aa).

Residue Gly11 coordinates ATP. 21 to 25 (RAVTR) provides a ligand contact to ADP. ATP is bound by residues 72–73 (RF) and 102–105 (GDGS). Asp103 lines the Mg(2+) pocket. Residue 125 to 127 (SID) coordinates substrate. The Proton acceptor role is filled by Asp127. Residue Arg154 coordinates ADP. Substrate-binding positions include Arg162 and 169-171 (MGR). ADP-binding positions include 185–187 (GAD) and 213–215 (KKH). Substrate is bound by residues Glu222, Arg243, and 249 to 252 (HMQR).

Belongs to the phosphofructokinase type A (PFKA) family. ATP-dependent PFK group I subfamily. Prokaryotic clade 'B1' sub-subfamily. In terms of assembly, homotetramer. The cofactor is Mg(2+).

The protein resides in the cytoplasm. It catalyses the reaction beta-D-fructose 6-phosphate + ATP = beta-D-fructose 1,6-bisphosphate + ADP + H(+). The protein operates within carbohydrate degradation; glycolysis; D-glyceraldehyde 3-phosphate and glycerone phosphate from D-glucose: step 3/4. Allosterically activated by ADP and other diphosphonucleosides, and allosterically inhibited by phosphoenolpyruvate. In terms of biological role, catalyzes the phosphorylation of D-fructose 6-phosphate to fructose 1,6-bisphosphate by ATP, the first committing step of glycolysis. In Lactobacillus gasseri (strain ATCC 33323 / DSM 20243 / BCRC 14619 / CIP 102991 / JCM 1131 / KCTC 3163 / NCIMB 11718 / NCTC 13722 / AM63), this protein is ATP-dependent 6-phosphofructokinase.